We begin with the raw amino-acid sequence, 448 residues long: Signal recognition particle protein (448 aa).

Residues 101–108 (GLQGSGKT), 182–186 (DSAGR), and 240–243 (SKFD) contribute to the GTP site.

The protein belongs to the GTP-binding SRP family. SRP54 subfamily. In terms of assembly, part of the signal recognition particle protein translocation system, which is composed of SRP and FtsY. SRP is a ribonucleoprotein composed of Ffh and a 4.5S RNA molecule.

The protein resides in the cytoplasm. It carries out the reaction GTP + H2O = GDP + phosphate + H(+). In terms of biological role, involved in targeting and insertion of nascent membrane proteins into the cytoplasmic membrane. Binds to the hydrophobic signal sequence of the ribosome-nascent chain (RNC) as it emerges from the ribosomes. The SRP-RNC complex is then targeted to the cytoplasmic membrane where it interacts with the SRP receptor FtsY. Interaction with FtsY leads to the transfer of the RNC complex to the Sec translocase for insertion into the membrane, the hydrolysis of GTP by both Ffh and FtsY, and the dissociation of the SRP-FtsY complex into the individual components. The polypeptide is Signal recognition particle protein (Helicobacter pylori (strain J99 / ATCC 700824) (Campylobacter pylori J99)).